The chain runs to 342 residues: Phosphoribosylformylglycinamidine cyclo-ligase (342 aa).

This sequence belongs to the AIR synthase family.

It is found in the cytoplasm. It catalyses the reaction 2-formamido-N(1)-(5-O-phospho-beta-D-ribosyl)acetamidine + ATP = 5-amino-1-(5-phospho-beta-D-ribosyl)imidazole + ADP + phosphate + H(+). It participates in purine metabolism; IMP biosynthesis via de novo pathway; 5-amino-1-(5-phospho-D-ribosyl)imidazole from N(2)-formyl-N(1)-(5-phospho-D-ribosyl)glycinamide: step 2/2. This Staphylococcus saprophyticus subsp. saprophyticus (strain ATCC 15305 / DSM 20229 / NCIMB 8711 / NCTC 7292 / S-41) protein is Phosphoribosylformylglycinamidine cyclo-ligase.